The primary structure comprises 428 residues: 3-phosphoshikimate 1-carboxyvinyltransferase (428 aa).

Residues lysine 22, serine 23, and arginine 27 each contribute to the 3-phosphoshikimate site. A phosphoenolpyruvate-binding site is contributed by lysine 22. Glycine 94 and arginine 122 together coordinate phosphoenolpyruvate. The 3-phosphoshikimate site is built by serine 168, serine 169, glutamine 170, serine 196, aspartate 315, and lysine 342. A phosphoenolpyruvate-binding site is contributed by glutamine 170. The Proton acceptor role is filled by aspartate 315. 3 residues coordinate phosphoenolpyruvate: arginine 346, arginine 389, and lysine 414.

It belongs to the EPSP synthase family. Monomer.

It localises to the cytoplasm. It catalyses the reaction 3-phosphoshikimate + phosphoenolpyruvate = 5-O-(1-carboxyvinyl)-3-phosphoshikimate + phosphate. It participates in metabolic intermediate biosynthesis; chorismate biosynthesis; chorismate from D-erythrose 4-phosphate and phosphoenolpyruvate: step 6/7. Its function is as follows. Catalyzes the transfer of the enolpyruvyl moiety of phosphoenolpyruvate (PEP) to the 5-hydroxyl of shikimate-3-phosphate (S3P) to produce enolpyruvyl shikimate-3-phosphate and inorganic phosphate. The polypeptide is 3-phosphoshikimate 1-carboxyvinyltransferase (Thiobacillus denitrificans (strain ATCC 25259 / T1)).